The chain runs to 315 residues: Probable cell division protein WhiA (315 aa).

The H-T-H motif DNA-binding region spans 277–311; the sequence is SLQELGAMMPSGQISKSGVNHRLRKLNQIAEGYQQ.

This sequence belongs to the WhiA family.

Involved in cell division and chromosome segregation. This Lacticaseibacillus paracasei (strain ATCC 334 / BCRC 17002 / CCUG 31169 / CIP 107868 / KCTC 3260 / NRRL B-441) (Lactobacillus paracasei) protein is Probable cell division protein WhiA.